A 496-amino-acid polypeptide reads, in one-letter code: MTAATSSANGAWEAVIGLETHVQLGTNSKIFTCASTTFGDDPNTHIDPVVCGLPGTLPVLNQMVLEYAVKAAMALNLNIAEHSKFDRKQYFYPDLPKNYQISQFDEPIAEEGWIEVEVAEKGKDTYLKRIGIERLHMEEDAGKLVHAGSDRLAGSTHSLVDYNRAGVALAEIVSKPDLRTGREAAEYASEIRRIMRYLGVSDGNMQEGSLRCDVNISVRQGADAPFGTKVEIKNMNSFSAIQKACEYEIQRQIKAYEAGEAVVQETRLWDEGKQLTKSMRSKEGSSDYRYFPDPDLGPIEVIASVREGWRTELPELPSAKRHRYAEEFGLSVYDARVLTDEYAMAEYFEAAVAAGAEAKGVANWIQGDIAAYVNANRLSYSTLPFRPEQLAEMVQLIDGGKISGKIAKEILPELLEKGGSAKAIVDQRGLGMISDPAAITTIVEELLAAHPQEVEAFRGGKTKLQGFFVGQLMKKTGGKADPKLANQILSQKLKGG.

Belongs to the GatB/GatE family. GatB subfamily. As to quaternary structure, heterotrimer of A, B and C subunits.

The enzyme catalyses L-glutamyl-tRNA(Gln) + L-glutamine + ATP + H2O = L-glutaminyl-tRNA(Gln) + L-glutamate + ADP + phosphate + H(+). The catalysed reaction is L-aspartyl-tRNA(Asn) + L-glutamine + ATP + H2O = L-asparaginyl-tRNA(Asn) + L-glutamate + ADP + phosphate + 2 H(+). Functionally, allows the formation of correctly charged Asn-tRNA(Asn) or Gln-tRNA(Gln) through the transamidation of misacylated Asp-tRNA(Asn) or Glu-tRNA(Gln) in organisms which lack either or both of asparaginyl-tRNA or glutaminyl-tRNA synthetases. The reaction takes place in the presence of glutamine and ATP through an activated phospho-Asp-tRNA(Asn) or phospho-Glu-tRNA(Gln). This Prochlorococcus marinus (strain MIT 9303) protein is Aspartyl/glutamyl-tRNA(Asn/Gln) amidotransferase subunit B.